The chain runs to 1222 residues: ATP-dependent helicase/nuclease subunit A (1222 aa).

The UvrD-like helicase ATP-binding domain maps to 39-495 (QKRTAQQIEA…ILLKENFRSQ (457 aa)). 60 to 67 (ASAGSGKT) is an ATP binding site. A UvrD-like helicase C-terminal domain is found at 524–810 (QLIAGSHAQT…NLMTIHKSKG (287 aa)).

The protein belongs to the helicase family. AddA subfamily. As to quaternary structure, heterodimer of AddA and AddB/RexB. The cofactor is Mg(2+).

The catalysed reaction is Couples ATP hydrolysis with the unwinding of duplex DNA by translocating in the 3'-5' direction.. The enzyme catalyses ATP + H2O = ADP + phosphate + H(+). The heterodimer acts as both an ATP-dependent DNA helicase and an ATP-dependent, dual-direction single-stranded exonuclease. Recognizes the chi site generating a DNA molecule suitable for the initiation of homologous recombination. The AddA nuclease domain is required for chi fragment generation; this subunit has the helicase and 3' -&gt; 5' nuclease activities. The protein is ATP-dependent helicase/nuclease subunit A of Streptococcus pyogenes serotype M12 (strain MGAS9429).